The chain runs to 202 residues: MNPEYDYLFKLLLIGDSGVGKSCLLLRFADDSYLDSYISTIGVDFKIRTVEQDGKTIKLQIWDTAGQERFRTITSSYYRGAHGIIVTYDVTDLESFNNVKQWLNEIDRYASENVNKLLVGNKNDLTSQKVVSTETAKAFADELGIPFLETSAKNATNVEEAFMAMTAAIKTRMASQPAGGAKPPTVQIRGQPVNQQSGCCSS.

Residues 15 to 23 (GDSGVGKSC), 33 to 40 (YLDSYIST), 63 to 67 (DTAGQ), 121 to 124 (NKND), and 151 to 153 (SAK) contribute to the GTP site. The Effector region signature appears at 37–45 (YISTIGVDF). The interval 174 to 202 (ASQPAGGAKPPTVQIRGQPVNQQSGCCSS) is disordered. The span at 192 to 202 (PVNQQSGCCSS) shows a compositional bias: polar residues. Residues Cys199 and Cys200 are each lipidated (S-geranylgeranyl cysteine).

It belongs to the small GTPase superfamily. Rab family.

It is found in the golgi apparatus. Its subcellular location is the trans-Golgi network membrane. The protein localises to the golgi apparatus membrane. Functionally, protein transport. Regulator of membrane traffic from the Golgi apparatus towards the endoplasmic reticulum (ER). The protein is Ras-related protein RABD2b (RABD2B) of Arabidopsis thaliana (Mouse-ear cress).